The chain runs to 193 residues: Glycerol-3-phosphate acyltransferase (193 aa).

Transmembrane regions (helical) follow at residues 2–22 (AFIISIIIAYLLGSLSFAVIV), 51–71 (QAAFYVLLGDAAKGLIAVLIA), 78–98 (GVSLAFVGLVAVLGHLFPVYF), 112–132 (VLLGLSFWIGLFVIATWVIVV), and 154–174 (IIAGRTDYLFPVLIIAILIIW).

This sequence belongs to the PlsY family. As to quaternary structure, probably interacts with PlsX.

The protein resides in the cell inner membrane. The enzyme catalyses an acyl phosphate + sn-glycerol 3-phosphate = a 1-acyl-sn-glycero-3-phosphate + phosphate. It functions in the pathway lipid metabolism; phospholipid metabolism. Functionally, catalyzes the transfer of an acyl group from acyl-phosphate (acyl-PO(4)) to glycerol-3-phosphate (G3P) to form lysophosphatidic acid (LPA). This enzyme utilizes acyl-phosphate as fatty acyl donor, but not acyl-CoA or acyl-ACP. The protein is Glycerol-3-phosphate acyltransferase of Coxiella burnetii (strain CbuK_Q154) (Coxiella burnetii (strain Q154)).